The primary structure comprises 698 residues: Elongation factor G (698 aa).

One can recognise a tr-type G domain in the interval 8 to 290 (ERYRNIGISA…AVIELLPSPV (283 aa)). Residues 17-24 (AHIDAGKT), 88-92 (DTPGH), and 142-145 (NKMD) each bind GTP.

This sequence belongs to the TRAFAC class translation factor GTPase superfamily. Classic translation factor GTPase family. EF-G/EF-2 subfamily.

It is found in the cytoplasm. Its function is as follows. Catalyzes the GTP-dependent ribosomal translocation step during translation elongation. During this step, the ribosome changes from the pre-translocational (PRE) to the post-translocational (POST) state as the newly formed A-site-bound peptidyl-tRNA and P-site-bound deacylated tRNA move to the P and E sites, respectively. Catalyzes the coordinated movement of the two tRNA molecules, the mRNA and conformational changes in the ribosome. This is Elongation factor G from Aromatoleum aromaticum (strain DSM 19018 / LMG 30748 / EbN1) (Azoarcus sp. (strain EbN1)).